Here is a 62-residue protein sequence, read N- to C-terminus: UPF0337 protein gsr0040 (62 aa).

Basic and acidic residues-rich tracts occupy residues 1 to 15 (MGID…KDVQ) and 27 to 62 (DDPK…IDNV). Residues 1–62 (MGIDKRAEAT…DQAHRTIDNV (62 aa)) form a disordered region.

Belongs to the UPF0337 (CsbD) family.

This chain is UPF0337 protein gsr0040, found in Gloeobacter violaceus (strain ATCC 29082 / PCC 7421).